The sequence spans 552 residues: Metal transporter Nramp6.1 (552 aa).

N-linked (GlcNAc...) asparagine glycosylation is present at N11. A run of 7 helical transmembrane segments spans residues 55–75, 88–108, 133–155, 159–181, 189–209, 238–258, and 275–295; these read FLSY…PGNL, ELLW…SLAA, CLWL…GTAF, ILFN…LLLG, KLEL…FGEM, IALL…ALVL, and YFLI…LAVI. N-linked (GlcNAc...) asparagine glycosylation is present at N306. The next 5 helical transmembrane spans lie at 338 to 358, 377 to 397, 402 to 422, 438 to 458, and 478 to 498; these read IYAI…TYAG, LVTR…GGSS, LIII…IPLL, IYII…NIYY, and VFIG…VIYL. Residues 511–552 form a disordered region; sequence PNKNDPQQQTNMENGLAKSTEGPEMVDRAPYREDLADIPLPE. Polar residues predominate over residues 514–523; sequence NDPQQQTNME. Over residues 535–545 the composition is skewed to basic and acidic residues; the sequence is MVDRAPYREDL.

The protein belongs to the NRAMP (TC 2.A.55) family.

The protein localises to the membrane. Its function is as follows. Probable divalent metal transporter. This is Metal transporter Nramp6.1 from Populus trichocarpa (Western balsam poplar).